Consider the following 239-residue polypeptide: Norbelladine 4'-O-methyltransferase (239 aa).

S-adenosyl-L-methionine is bound by residues Val55, Glu77, 79-80 (GV), Ser85, Asp103, and Ala132. Asp155 is a binding site for a divalent metal cation. S-adenosyl-L-methionine is bound at residue Asp157. Asp181 and Asn182 together coordinate a divalent metal cation.

It belongs to the class I-like SAM-binding methyltransferase superfamily. Cation-dependent O-methyltransferase family. The cofactor is Mg(2+). In terms of tissue distribution, highly expressed in bulbs. Detected in leaves and inflorescences.

It catalyses the reaction norbelladine + S-adenosyl-L-methionine = 4'-O-methylnorbelladine + S-adenosyl-L-homocysteine + H(+). Its pathway is alkaloid biosynthesis. Its function is as follows. 4'-O-methyltransferase converting norbelladine to 4'-O-methylnorbelladine. 4'-O-methylnorbelladine is a precursor to all Amaryllidaceae alkaloids such as galanthamine, lycorine and haemanthamine, and including haemanthamine- and crinamine-type alkaloids, promising anticancer agents. Can use norbelladine, N-methylnorbelladine and dopamine as substrate, but not caffeic acid, vanillin, 3,4-dihydroxybenzaldehyde and tyramine. The polypeptide is Norbelladine 4'-O-methyltransferase (Narcissus aff. pseudonarcissus MK-2014 (Daffodil)).